The following is a 70-amino-acid chain: Large ribosomal subunit protein eL38 (70 aa).

Belongs to the eukaryotic ribosomal protein eL38 family.

The protein is Large ribosomal subunit protein eL38 (rpl-38) of Ostertagia ostertagi (Brown stomach worm).